A 201-amino-acid polypeptide reads, in one-letter code: Large ribosomal subunit protein uL4 (201 aa).

Residues 45 to 72 (AQKTRAEVTGSGKKPWRQKGTGRARAGS) are disordered.

This sequence belongs to the universal ribosomal protein uL4 family. Part of the 50S ribosomal subunit.

Functionally, one of the primary rRNA binding proteins, this protein initially binds near the 5'-end of the 23S rRNA. It is important during the early stages of 50S assembly. It makes multiple contacts with different domains of the 23S rRNA in the assembled 50S subunit and ribosome. In terms of biological role, forms part of the polypeptide exit tunnel. This Shewanella baltica (strain OS223) protein is Large ribosomal subunit protein uL4.